The primary structure comprises 102 residues: Spexin prohormone 1 (102 aa).

The N-terminal stretch at 1-26 is a signal peptide; sequence MKDLRTLAAYALALLLLATFVSYSRS. A propeptide spanning residues 27–35 is cleaved from the precursor; it reads APMGSFQRR. Glutamine 49 is modified (glutamine amide). The propeptide occupies 50-102; sequence GRRFVSEDRNEGDLYDTIRLESQSQNTENLSISKAAAFLLNVLQQARDEGEPY.

The protein belongs to the spexin family. In terms of tissue distribution, expressed in the anterior hypothalamus, ventromedial thalamic nucleus and medial longitudinal fasciculus of the brain (at protein level). Widely expressed. Expressed predominantly in the spleen, kidney, liver and testis. Expressed in olfactory bulb, pituitary, telencephalon, diencephalons, spinal cord, optic tectum, cerebellum and hypothalamus of the brain.

The protein resides in the secreted. It is found in the extracellular space. The protein localises to the cytoplasmic vesicle. It localises to the secretory vesicle. Plays a role in the regulation of food intake and body weight and in reproduction. May also play a role as a central modulator of cardiovascular and renal function and nociception. Its function is as follows. Brain administration of the peptide inhibits food consumption. May function as a satiety factor for feeding control. Involved in the negative regulation of the reproductive axis by inhibiting luteinizing hormone secretion from pituitary cells. This chain is Spexin prohormone 1 (spx), found in Carassius auratus (Goldfish).